The chain runs to 178 residues: Interleukin-10 (178 aa).

The signal sequence occupies residues 1–18 (MHSSALLCCLVFLTGVRA). Intrachain disulfides connect cysteine 30/cysteine 126 and cysteine 80/cysteine 132. N-linked (GlcNAc...) asparagine glycosylation occurs at asparagine 134.

The protein belongs to the IL-10 family. As to quaternary structure, homodimer. Interacts with IL10RA and IL10RB.

The protein localises to the secreted. Major immune regulatory cytokine that acts on many cells of the immune system where it has profound anti-inflammatory functions, limiting excessive tissue disruption caused by inflammation. Mechanistically, IL10 binds to its heterotetrameric receptor comprising IL10RA and IL10RB leading to JAK1 and STAT2-mediated phosphorylation of STAT3. In turn, STAT3 translocates to the nucleus where it drives expression of anti-inflammatory mediators. Targets antigen-presenting cells (APCs) such as macrophages and monocytes and inhibits their release of pro-inflammatory cytokines including granulocyte-macrophage colony-stimulating factor /GM-CSF, granulocyte colony-stimulating factor/G-CSF, IL-1 alpha, IL-1 beta, IL-6, IL-8 and TNF-alpha. Also interferes with antigen presentation by reducing the expression of MHC-class II and co-stimulatory molecules, thereby inhibiting their ability to induce T cell activation. In addition, controls the inflammatory response of macrophages by reprogramming essential metabolic pathways including mTOR signaling. This chain is Interleukin-10 (IL10), found in Saimiri sciureus (Common squirrel monkey).